A 579-amino-acid chain; its full sequence is Nuclear receptor coactivator 5 (579 aa).

Methionine 1 carries the post-translational modification N-acetylmethionine. The interval 1–77 is disordered; it reads MNTAPSRPSP…DIRDHRDSRS (77 aa). Positions 1–158 are transcription repression; it reads MNTAPSRPSP…RDSFDGRGPP (158 aa). At threonine 3 the chain carries Phosphothreonine. A phosphoserine mark is found at serine 9, serine 21, serine 29, serine 34, serine 96, serine 116, serine 126, serine 143, and serine 151. The span at 11 to 77 shows a compositional bias: basic and acidic residues; sequence TRRDPYSFGD…DIRDHRDSRS (67 aa). Residues 148 to 172 are disordered; the sequence is YRDSFDGRGPPGPESQSRAKERLKR. Threonine 274 is modified (phosphothreonine). Residues 345–349 carry the LXXLL motif motif; it reads LINLL. Residues serine 378 and serine 381 each carry the phosphoserine modification. 2 disordered regions span residues 378–428 and 446–529; these read SADS…PTSQ and ANSS…RPVS. Low complexity-rich tracts occupy residues 395–420 and 446–460; these read SGSS…ATPT and ANSS…TGSS. The interval 458 to 579 is transcription activation; sequence GSSQNQNFST…APMGSYQRHY (122 aa). The segment covering 461–485 has biased composition (polar residues); that stretch reads QNQNFSTAANSQPQQRPQASGNQPP.

In terms of assembly, binds HTATIP2/TIP30. Interacts with YLPM1. Forms a complex with ILF2, ILF3, YLPM1, KHDRBS1, RBMX and PPP1CA.

The protein localises to the nucleus. Its function is as follows. Nuclear receptor coregulator that can have both coactivator and corepressor functions. Interacts with nuclear receptors for steroids (ESR1 and ESR2) independently of the steroid binding domain (AF-2) of the ESR receptors, and with the orphan nuclear receptor NR1D2. Involved in the coactivation of nuclear steroid receptors (ER) as well as the corepression of MYC in response to 17-beta-estradiol (E2). This chain is Nuclear receptor coactivator 5 (Ncoa5), found in Mus musculus (Mouse).